The following is a 650-amino-acid chain: uncharacterized protein (650 aa).

This is an uncharacterized protein from Caenorhabditis elegans.